We begin with the raw amino-acid sequence, 200 residues long: MKRVNVILAGGASRRFGEPKAFAKWKGGMFYEQAKKAFGGGETVIISRPEHIKKFLSNRERHVLADEPRFRGMGPLAGIYTAMKQTEGETFTVISCDTPLVTRKTMVALEMKLTGNLDAVIPVCKNREQPLLAVYHKRVQDVLFDQLTQNKLKMTDTLKRLSVCYVQAEDIGAGPEEFANINTQDDYTRLLAHVESSNQD.

GTP-binding positions include 8–10 (LAG), Lys20, Asp66, and Asp97. Asp97 contributes to the Mg(2+) binding site.

This sequence belongs to the MobA family. The cofactor is Mg(2+).

The protein localises to the cytoplasm. It carries out the reaction Mo-molybdopterin + GTP + H(+) = Mo-molybdopterin guanine dinucleotide + diphosphate. Its function is as follows. Transfers a GMP moiety from GTP to Mo-molybdopterin (Mo-MPT) cofactor (Moco or molybdenum cofactor) to form Mo-molybdopterin guanine dinucleotide (Mo-MGD) cofactor. In Bacillus velezensis (strain DSM 23117 / BGSC 10A6 / LMG 26770 / FZB42) (Bacillus amyloliquefaciens subsp. plantarum), this protein is Probable molybdenum cofactor guanylyltransferase.